The following is a 316-amino-acid chain: Putative ubiquitin-conjugating enzyme E2 39 (316 aa).

The 161-residue stretch at 57–217 (NWVKDIQKEW…VFVFSLKTMH (161 aa)) folds into the UBC core domain. Cys143 functions as the Glycyl thioester intermediate in the catalytic mechanism.

It belongs to the ubiquitin-conjugating enzyme family.

It carries out the reaction S-ubiquitinyl-[E1 ubiquitin-activating enzyme]-L-cysteine + [E2 ubiquitin-conjugating enzyme]-L-cysteine = [E1 ubiquitin-activating enzyme]-L-cysteine + S-ubiquitinyl-[E2 ubiquitin-conjugating enzyme]-L-cysteine.. It functions in the pathway protein modification; protein ubiquitination. In terms of biological role, accepts the ubiquitin from the E1 complex and catalyzes its covalent attachment to other proteins. The polypeptide is Putative ubiquitin-conjugating enzyme E2 39 (UBC39) (Arabidopsis thaliana (Mouse-ear cress)).